A 424-amino-acid polypeptide reads, in one-letter code: F-box protein At2g38590 (424 aa).

An F-box domain is found at 2–47 (TTMISNLPRVLIEEIFFRVPLKSLRAVRLTCKSWNTLSKSRSFRKL).

In Arabidopsis thaliana (Mouse-ear cress), this protein is F-box protein At2g38590.